The sequence spans 403 residues: Ribose-phosphate pyrophosphokinase 1, chloroplastic (403 aa).

A chloroplast-targeting transit peptide spans 1–49 (MASLGLSFPPAAKTPTYLASSSSTFFSNSSLSVRTSQFRSRNSVFACVK). 4 residues coordinate Mg(2+): Asp217, His219, Asp228, and Asp232. The interval 303 to 318 (GKVAIMVDDMIDTAGT) is binding of phosphoribosylpyrophosphate.

It belongs to the ribose-phosphate pyrophosphokinase family. It depends on Mg(2+) as a cofactor.

It localises to the plastid. The protein resides in the chloroplast. It catalyses the reaction D-ribose 5-phosphate + ATP = 5-phospho-alpha-D-ribose 1-diphosphate + AMP + H(+). This is Ribose-phosphate pyrophosphokinase 1, chloroplastic (PRS1) from Arabidopsis thaliana (Mouse-ear cress).